The sequence spans 297 residues: Glycine--tRNA ligase alpha subunit (297 aa).

Belongs to the class-II aminoacyl-tRNA synthetase family. Tetramer of two alpha and two beta subunits.

It is found in the cytoplasm. The catalysed reaction is tRNA(Gly) + glycine + ATP = glycyl-tRNA(Gly) + AMP + diphosphate. The sequence is that of Glycine--tRNA ligase alpha subunit from Sulfurihydrogenibium sp. (strain YO3AOP1).